The primary structure comprises 113 residues: MNILDKVDAASLRDDIPEFRSGDTVDVHVKVIEGQKSRIQVFRGVVIRRQGSGVRETFTVRKVSFGIGVERTFPVHTPNIDHIEVLTRGDVRRAKLYYLRNLRGKAAKIKERR.

Belongs to the bacterial ribosomal protein bL19 family.

Functionally, this protein is located at the 30S-50S ribosomal subunit interface and may play a role in the structure and function of the aminoacyl-tRNA binding site. The sequence is that of Large ribosomal subunit protein bL19 from Corynebacterium kroppenstedtii (strain DSM 44385 / JCM 11950 / CIP 105744 / CCUG 35717).